The following is a 271-amino-acid chain: Formamidopyrimidine-DNA glycosylase (271 aa).

Pro2 (schiff-base intermediate with DNA) is an active-site residue. Glu3 functions as the Proton donor in the catalytic mechanism. Lys58 functions as the Proton donor; for beta-elimination activity in the catalytic mechanism. 3 residues coordinate DNA: His92, Arg111, and Arg152. The segment at 237-271 (MVYGREGQACKHCGRELKHATIGQRATVWCAACQR) adopts an FPG-type zinc-finger fold. The active-site Proton donor; for delta-elimination activity is Arg261.

Belongs to the FPG family. As to quaternary structure, monomer. Zn(2+) serves as cofactor.

The catalysed reaction is Hydrolysis of DNA containing ring-opened 7-methylguanine residues, releasing 2,6-diamino-4-hydroxy-5-(N-methyl)formamidopyrimidine.. The enzyme catalyses 2'-deoxyribonucleotide-(2'-deoxyribose 5'-phosphate)-2'-deoxyribonucleotide-DNA = a 3'-end 2'-deoxyribonucleotide-(2,3-dehydro-2,3-deoxyribose 5'-phosphate)-DNA + a 5'-end 5'-phospho-2'-deoxyribonucleoside-DNA + H(+). Its function is as follows. Involved in base excision repair of DNA damaged by oxidation or by mutagenic agents. Acts as a DNA glycosylase that recognizes and removes damaged bases. Has a preference for oxidized purines, such as 7,8-dihydro-8-oxoguanine (8-oxoG). Has AP (apurinic/apyrimidinic) lyase activity and introduces nicks in the DNA strand. Cleaves the DNA backbone by beta-delta elimination to generate a single-strand break at the site of the removed base with both 3'- and 5'-phosphates. The polypeptide is Formamidopyrimidine-DNA glycosylase (Xanthomonas campestris pv. campestris (strain B100)).